The primary structure comprises 463 residues: Glutamate--tRNA ligase 1 (463 aa).

A 'HIGH' region motif is present at residues 10–20; that stretch reads PSPTGYLHIGG. The 'KMSKS' region motif lies at 238–242; sequence KLSKR. Lysine 241 provides a ligand contact to ATP.

It belongs to the class-I aminoacyl-tRNA synthetase family. Glutamate--tRNA ligase type 1 subfamily. In terms of assembly, monomer.

It is found in the cytoplasm. The catalysed reaction is tRNA(Glu) + L-glutamate + ATP = L-glutamyl-tRNA(Glu) + AMP + diphosphate. Functionally, catalyzes the attachment of glutamate to tRNA(Glu) in a two-step reaction: glutamate is first activated by ATP to form Glu-AMP and then transferred to the acceptor end of tRNA(Glu). This chain is Glutamate--tRNA ligase 1, found in Helicobacter pylori (strain P12).